The sequence spans 948 residues: RNA polymerase-associated protein RapA (948 aa).

The Helicase ATP-binding domain occupies 164 to 332; it reads EVADRIAPRV…FARLRLLDPN (169 aa). 177–184 provides a ligand contact to ATP; it reads DEVGLGKT. Residues 278–281 carry the DEAH box motif; it reads DEAH. One can recognise a Helicase C-terminal domain in the interval 473 to 627; sequence RVEWLIDQLK…TCPTGNALQH (155 aa).

The protein belongs to the SNF2/RAD54 helicase family. RapA subfamily. Interacts with the RNAP. Has a higher affinity for the core RNAP than for the holoenzyme. Its ATPase activity is stimulated by binding to RNAP.

Functionally, transcription regulator that activates transcription by stimulating RNA polymerase (RNAP) recycling in case of stress conditions such as supercoiled DNA or high salt concentrations. Probably acts by releasing the RNAP, when it is trapped or immobilized on tightly supercoiled DNA. Does not activate transcription on linear DNA. Probably not involved in DNA repair. This chain is RNA polymerase-associated protein RapA, found in Pseudomonas fluorescens (strain SBW25).